The primary structure comprises 771 residues: Hyperosmolality-gated Ca2+ permeable channel 1.2 (771 aa).

Residues 1 to 4 (MATL) are Extracellular-facing. Residues 5–27 (QDIGVSAGINILSAFVFFIIFAV) form a helical membrane-spanning segment. At 28-100 (LRLQPFNDRV…AGLDSVVYLR (73 aa)) the chain is on the cytoplasmic side. The chain crosses the membrane as a helical span at residues 101-125 (IYWLGLKIFTPIAVLAWAVLVPVNW). Residues 126–156 (TNNTLEMAKQLRNVTSSDIDKLSVSNIPEYS) lie on the Extracellular side of the membrane. A helical membrane pass occupies residues 157–178 (MRFWTHIVMAYAFTIWTCYVLM). The Cytoplasmic portion of the chain corresponds to 179–374 (KEYETIANMR…AIPYVSLTVR (196 aa)). Residues 375-401 (RLIMHVAFFFLTFFFIVPIAFVQSLAT) form a helical membrane-spanning segment. Over 402 to 419 (IEGIVKAAPFLKFIVDDK) the chain is Extracellular. Residues 420-445 (FMKSVIQGFLPGIALKLFLAFLPSIL) form a helical membrane-spanning segment. The Cytoplasmic portion of the chain corresponds to 446 to 462 (MIMSKFEGFTSISSLER). A helical transmembrane segment spans residues 463–485 (RAAFRYYIFNLVNVFLASVIAGA). Topologically, residues 486 to 504 (AFEQLNSFLNQSANQIPKT) are extracellular. A helical membrane pass occupies residues 505–533 (IGVAIPMKATFFITYIMVDGWAGVAGEIL). The Cytoplasmic segment spans residues 534 to 566 (MLKPLIMFHLKNAFLVKTDKDREEAMDPGSIGF). The chain crosses the membrane as a helical span at residues 567–588 (NTGEPRIQLYFLLGLVYAPVTP). Met589 is a topological domain (extracellular). A helical membrane pass occupies residues 590–605 (LLPFILVFFALAYIVY). Topologically, residues 606–625 (RHQIINVYNQEYESAAAFWP) are cytoplasmic. A helical transmembrane segment spans residues 626–648 (DVHGRVIAALVISQLLLMGLLGT). The Extracellular portion of the chain corresponds to 649-651 (KHA). The helical transmembrane segment at 652–670 (ALAAPFLIALPVLTIGFHH) threads the bilayer. The Cytoplasmic portion of the chain corresponds to 671 to 771 (FCKGRYEPAF…PSLPFSGKLV (101 aa)). The tract at residues 741-771 (PTKRQSRRNTPAPSIISGDDSPSLPFSGKLV) is disordered.

Belongs to the CSC1 (TC 1.A.17) family. Homodimer.

It localises to the membrane. Its activity is regulated as follows. Activated by hyperosmotic shock after mannitol or NaCl treatment. Activated by mechanical pressure: activated in response to membrane stretch and poke. Membrane lipids play a key role in mechanosensation by acting as a wall mainly formed by lipid head groups. Functionally, acts as an osmosensitive calcium-permeable cation channel. Specifically conducts cations including Ca(2+), K(+) and Na(+) in vitro. Inactivation or closure of the channel is calcium-dependent. Mechanosensitive ion channel that converts mechanical stimuli into a flow of ions: activated in response to membrane stretch and poke. This Arabidopsis thaliana (Mouse-ear cress) protein is Hyperosmolality-gated Ca2+ permeable channel 1.2.